The chain runs to 176 residues: Cytochrome b (176 aa).

The next 3 membrane-spanning stretches (helical) occupy residues 33–53, 77–98, and 113–133; these read FGSL…FLAM, WMLR…YLHV, and WNVG…GYVL. Heme b contacts are provided by H83 and H97.

The protein belongs to the cytochrome b family. As to quaternary structure, the cytochrome bc1 complex contains 11 subunits: 3 respiratory subunits (MT-CYB, CYC1 and UQCRFS1), 2 core proteins (UQCRC1 and UQCRC2) and 6 low-molecular weight proteins (UQCRH/QCR6, UQCRB/QCR7, UQCRQ/QCR8, UQCR10/QCR9, UQCR11/QCR10 and a cleavage product of UQCRFS1). This cytochrome bc1 complex then forms a dimer. Heme b serves as cofactor.

It is found in the mitochondrion inner membrane. Component of the ubiquinol-cytochrome c reductase complex (complex III or cytochrome b-c1 complex) that is part of the mitochondrial respiratory chain. The b-c1 complex mediates electron transfer from ubiquinol to cytochrome c. Contributes to the generation of a proton gradient across the mitochondrial membrane that is then used for ATP synthesis. This Idionycteris phyllotis (Allen's big-eared bat) protein is Cytochrome b (MT-CYB).